We begin with the raw amino-acid sequence, 194 residues long: 7-methyl-GTP pyrophosphatase (194 aa).

Asp-69 acts as the Proton acceptor in catalysis.

Belongs to the Maf family. YceF subfamily. Requires a divalent metal cation as cofactor.

It localises to the cytoplasm. It carries out the reaction N(7)-methyl-GTP + H2O = N(7)-methyl-GMP + diphosphate + H(+). In terms of biological role, nucleoside triphosphate pyrophosphatase that hydrolyzes 7-methyl-GTP (m(7)GTP). May have a dual role in cell division arrest and in preventing the incorporation of modified nucleotides into cellular nucleic acids. This is 7-methyl-GTP pyrophosphatase (yceF1) from Salmonella choleraesuis (strain SC-B67).